The sequence spans 324 residues: Phospho-N-acetylmuramoyl-pentapeptide-transferase (324 aa).

10 consecutive transmembrane segments (helical) span residues 9 to 29, 53 to 73, 77 to 97, 117 to 137, 149 to 169, 176 to 196, 201 to 221, 227 to 247, 253 to 273, and 304 to 324; these read TFAV…PFLV, TMGA…FSFI, VSAA…LGFL, FLGQ…SDFA, IDLG…FSNA, LDGL…VIAF, MDVA…LLFN, IFMG…VSIL, LLLL…LQVF, and VLTF…VVIF.

This sequence belongs to the glycosyltransferase 4 family. MraY subfamily. Requires Mg(2+) as cofactor.

The protein resides in the cell membrane. It carries out the reaction UDP-N-acetyl-alpha-D-muramoyl-L-alanyl-gamma-D-glutamyl-meso-2,6-diaminopimeloyl-D-alanyl-D-alanine + di-trans,octa-cis-undecaprenyl phosphate = di-trans,octa-cis-undecaprenyl diphospho-N-acetyl-alpha-D-muramoyl-L-alanyl-D-glutamyl-meso-2,6-diaminopimeloyl-D-alanyl-D-alanine + UMP. It functions in the pathway cell wall biogenesis; peptidoglycan biosynthesis. Its function is as follows. Catalyzes the initial step of the lipid cycle reactions in the biosynthesis of the cell wall peptidoglycan: transfers peptidoglycan precursor phospho-MurNAc-pentapeptide from UDP-MurNAc-pentapeptide onto the lipid carrier undecaprenyl phosphate, yielding undecaprenyl-pyrophosphoryl-MurNAc-pentapeptide, known as lipid I. In Listeria innocua serovar 6a (strain ATCC BAA-680 / CLIP 11262), this protein is Phospho-N-acetylmuramoyl-pentapeptide-transferase.